The chain runs to 295 residues: Ubiquitin-conjugating enzyme E2-34 kDa (295 aa).

The region spanning 7-169 (TASSLLLRQY…VKMEVERSKQ (163 aa)) is the UBC core domain. Residue Cys95 is the Glycyl thioester intermediate of the active site. Residues 185–295 (ISQSKLDEPE…EDVERVSKKI (111 aa)) are disordered. Residue Ser186 is modified to Phosphoserine. A compositionally biased stretch (basic and acidic residues) spans 189-200 (KLDEPESNKDMA). Acidic residues-rich tracts occupy residues 207 to 226 (SDLD…DYDD) and 234 to 265 (EDDD…DSID). The span at 269–279 (VMDRKQPHKAE) shows a compositional bias: basic and acidic residues. 2 positions are modified to phosphoserine: Ser282 and Ser292.

Belongs to the ubiquitin-conjugating enzyme family. In terms of assembly, interacts with CDC53. Component of the E3 ubiquitin ligase complexes SCF with CDC53, SKP1/CBF3D, HRT1 and some F-box proteins like MET30 and CDC4.

Its subcellular location is the cytoplasm. The protein localises to the nucleus. The enzyme catalyses S-ubiquitinyl-[E1 ubiquitin-activating enzyme]-L-cysteine + [E2 ubiquitin-conjugating enzyme]-L-cysteine = [E1 ubiquitin-activating enzyme]-L-cysteine + S-ubiquitinyl-[E2 ubiquitin-conjugating enzyme]-L-cysteine.. The protein operates within protein modification; protein ubiquitination. In terms of biological role, catalyzes the covalent attachment of ubiquitin to other proteins. Capable, in vitro, to ubiquitinate histone H2A. Its function is as follows. Mediates the initiation of DNA replication (transition of G1 to S phase in cell cycle). Essential component of the E3 ubiquitin ligase complex SCF (SKP1-CUL1-F-box protein), which mediates the ubiquitination and subsequent proteasomal degradation of target proteins. Involved in the regulation of methionine biosynthesis genes and in the degradation of CDC6 together with CDC4 and CDC53. This is Ubiquitin-conjugating enzyme E2-34 kDa (CDC34) from Saccharomyces cerevisiae (strain ATCC 204508 / S288c) (Baker's yeast).